The sequence spans 91 residues: MAVKIRLKRMGSKKSPFYRIVVADSRSPRDGRFIETVGTYNPLKDPAEVVLKEDLVLDWLSKGAQPSDTVRNILSKEGVMKKHHEAKNVKK.

This sequence belongs to the bacterial ribosomal protein bS16 family.

The sequence is that of Small ribosomal subunit protein bS16 from Enterococcus faecalis (strain ATCC 700802 / V583).